Reading from the N-terminus, the 116-residue chain is MSEPQNGRGALFTGGLAAILASACCLGPLVLIALGFSGAWIGNLTVLEPYRPIFIGVALVALFFAWRRIYRPSAACKPGEVCAIPQVPATYKLIFWGVAVLVLVALGFPYVVPFFY.

2 consecutive transmembrane segments (helical) span residues Leu-16–Phe-36 and Val-46–Trp-66. Hg(2+) contacts are provided by Cys-24 and Cys-25. Residues Cys-76 and Cys-82 each coordinate Hg(2+). The helical transmembrane segment at Ile-94 to Phe-114 threads the bilayer.

It belongs to the MerT family.

The protein resides in the cell inner membrane. Its function is as follows. Involved in mercury resistance. Probably transfers a mercuric ion from the periplasmic Hg(2+)-binding protein MerP to the cytoplasmic mercuric reductase MerA. This Pseudomonas fluorescens protein is Mercuric transport protein MerT.